Consider the following 544-residue polypeptide: Chaperonin GroEL (544 aa).

ATP-binding positions include 29 to 32, 86 to 90, G413, 476 to 478, and D492; these read TLGP, DGTTT, and NAA.

Belongs to the chaperonin (HSP60) family. Forms a cylinder of 14 subunits composed of two heptameric rings stacked back-to-back. Interacts with the co-chaperonin GroES.

The protein localises to the cytoplasm. The enzyme catalyses ATP + H2O + a folded polypeptide = ADP + phosphate + an unfolded polypeptide.. Functionally, together with its co-chaperonin GroES, plays an essential role in assisting protein folding. The GroEL-GroES system forms a nano-cage that allows encapsulation of the non-native substrate proteins and provides a physical environment optimized to promote and accelerate protein folding. The polypeptide is Chaperonin GroEL (Bacillus anthracis (strain A0248)).